The following is a 368-amino-acid chain: Forkhead box protein I2 (368 aa).

The interval 33–54 (QNQQLPQRPAAPPALGYGRNEY) is disordered. The segment at residues 124-218 (RPPYSYSSLI…DNGNFRRKRK (95 aa)) is a DNA-binding region (fork-head). The disordered stretch occupies residues 243–272 (SLGSDSPRGASALEQSSYGTPESKSRPAGG). Positions 255 to 264 (LEQSSYGTPE) are enriched in polar residues.

The protein resides in the nucleus. In terms of biological role, possible transcriptional activator. This Xenopus tropicalis (Western clawed frog) protein is Forkhead box protein I2.